The primary structure comprises 632 residues: Phosphomethylpyrimidine synthase (632 aa).

Residues 1–23 (MNIRSNPQQTVPAVTTGPLSSSR) are compositionally biased toward polar residues. Residues 1-26 (MNIRSNPQQTVPAVTTGPLSSSRKIF) are disordered. Substrate is bound by residues asparagine 221, methionine 250, tyrosine 279, histidine 315, 335–337 (SRG), 376–379 (DGLR), and glutamate 415. Residue histidine 419 participates in Zn(2+) binding. Tyrosine 442 is a binding site for substrate. Zn(2+) is bound at residue histidine 483. Residues cysteine 563, cysteine 566, and cysteine 571 each coordinate [4Fe-4S] cluster.

Belongs to the ThiC family. As to quaternary structure, homodimer. [4Fe-4S] cluster serves as cofactor.

The enzyme catalyses 5-amino-1-(5-phospho-beta-D-ribosyl)imidazole + S-adenosyl-L-methionine = 4-amino-2-methyl-5-(phosphooxymethyl)pyrimidine + CO + 5'-deoxyadenosine + formate + L-methionine + 3 H(+). Its pathway is cofactor biosynthesis; thiamine diphosphate biosynthesis. Its function is as follows. Catalyzes the synthesis of the hydroxymethylpyrimidine phosphate (HMP-P) moiety of thiamine from aminoimidazole ribotide (AIR) in a radical S-adenosyl-L-methionine (SAM)-dependent reaction. The chain is Phosphomethylpyrimidine synthase from Bradyrhizobium diazoefficiens (strain JCM 10833 / BCRC 13528 / IAM 13628 / NBRC 14792 / USDA 110).